Here is a 464-residue protein sequence, read N- to C-terminus: CRISPR system endoribonuclease Csm6 (464 aa).

Positions 1-190 (MEDLDALWER…LRILPNPHEA (190 aa)) are CARF domain. Positions 191–464 (LAEVDALFAK…LSPEPVPLGF (274 aa)) are HEPN domain.

Belongs to the CRISPR-associated Csm6 family. Homodimer. The protein forms a twisted, head-to-head dimer; the composite ssRNase active site is formed at the dimer interface. Requires Does not require a metal cofactor. as cofactor.

With respect to regulation, non-specific ssRNase activity is allosterically activated about 1000-fold by cyclic tetraadenylate (cA4), which probably binds to its CARF domain. In terms of biological role, CRISPR (clustered regularly interspaced short palindromic repeat) is an adaptive immune system that provides protection against mobile genetic elements (viruses, transposable elements and conjugative plasmids). CRISPR clusters contain spacers, sequences complementary to antecedent mobile elements, and target invading nucleic acids. CRISPR clusters are transcribed and processed into CRISPR RNA (crRNA). The type III-A Csm effector complex binds crRNA and acts as a crRNA-guided RNase, DNase and cyclic oligoadenylate synthase; binding of target RNA cognate to the crRNA is required for all activities. This protein is not part of the Csm effector complex. A single-strand-specific endoribonuclease (ssRNase) producing free 5'-OH. Activity is approximately 1000-fold stimulated by cyclic oligoadenylate (cOA); only cyclic tetraadenylate (cA4) stimulates the ssRNase activity while linear oligoadenylates do not activate the RNase. Another study showed stimulation by linear tetraadenylate at very high concentrations, but did not examine stimulation by cA4. This chain is CRISPR system endoribonuclease Csm6, found in Thermus thermophilus (strain ATCC 27634 / DSM 579 / HB8).